The chain runs to 241 residues: Probable 2-phosphosulfolactate phosphatase (241 aa).

The protein belongs to the ComB family. The cofactor is Mg(2+).

It carries out the reaction (2R)-O-phospho-3-sulfolactate + H2O = (2R)-3-sulfolactate + phosphate. The protein is Probable 2-phosphosulfolactate phosphatase of Deinococcus geothermalis (strain DSM 11300 / CIP 105573 / AG-3a).